We begin with the raw amino-acid sequence, 839 residues long: Periplasmic nitrate reductase (839 aa).

The tat-type signal signal peptide spans Met1–Ala34. One can recognise a 4Fe-4S Mo/W bis-MGD-type domain in the interval Ile46 to Asp102. 4 residues coordinate [4Fe-4S] cluster: Cys53, Cys56, Cys60, and Cys88. Mo-bis(molybdopterin guanine dinucleotide)-binding positions include Lys90, Gln157, Asn182, Cys186, Trp219–Met226, Ser250–His254, Gln269–Asp271, Met379, Gln383, Asn489, Ser515–Asp516, Lys538, Asp565, and Thr729–Thr738. Phe805 lines the substrate pocket. Asn813 and Lys830 together coordinate Mo-bis(molybdopterin guanine dinucleotide).

This sequence belongs to the prokaryotic molybdopterin-containing oxidoreductase family. NasA/NapA/NarB subfamily. As to quaternary structure, component of the periplasmic nitrate reductase NapAB complex composed of NapA and NapB. It depends on [4Fe-4S] cluster as a cofactor. Mo-bis(molybdopterin guanine dinucleotide) is required as a cofactor. In terms of processing, predicted to be exported by the Tat system. The position of the signal peptide cleavage has not been experimentally proven.

The protein resides in the periplasm. It catalyses the reaction 2 Fe(II)-[cytochrome] + nitrate + 2 H(+) = 2 Fe(III)-[cytochrome] + nitrite + H2O. In terms of biological role, catalytic subunit of the periplasmic nitrate reductase complex NapAB. Receives electrons from NapB and catalyzes the reduction of nitrate to nitrite. The polypeptide is Periplasmic nitrate reductase (Laribacter hongkongensis (strain HLHK9)).